We begin with the raw amino-acid sequence, 201 residues long: 3-isopropylmalate dehydratase small subunit (201 aa).

It belongs to the LeuD family. LeuD type 1 subfamily. As to quaternary structure, heterodimer of LeuC and LeuD.

It catalyses the reaction (2R,3S)-3-isopropylmalate = (2S)-2-isopropylmalate. It participates in amino-acid biosynthesis; L-leucine biosynthesis; L-leucine from 3-methyl-2-oxobutanoate: step 2/4. Catalyzes the isomerization between 2-isopropylmalate and 3-isopropylmalate, via the formation of 2-isopropylmaleate. This Cereibacter sphaeroides (strain KD131 / KCTC 12085) (Rhodobacter sphaeroides) protein is 3-isopropylmalate dehydratase small subunit.